Here is a 455-residue protein sequence, read N- to C-terminus: UDP-glycosyltransferase 87A2 (455 aa).

M1 bears the N-acetylmethionine mark. Residues S278, 327–329, 344–352, and 366–369 contribute to the UDP-alpha-D-glucose site; these read CDQ, HCGFNSTLE, and FWDQ.

Belongs to the UDP-glycosyltransferase family.

This chain is UDP-glycosyltransferase 87A2 (UGT87A2), found in Arabidopsis thaliana (Mouse-ear cress).